Here is a 79-residue protein sequence, read N- to C-terminus: Secretory calcium-binding phosphoprotein proline-glutamine rich 1 (79 aa).

An N-terminal signal peptide occupies residues 1–15 (MKFLILAGLLSTATA).

The protein localises to the secreted. Its function is as follows. Tooth-associated epithelia protein that may participate in structuring the basal lamina at cell-tooth interface. The sequence is that of Secretory calcium-binding phosphoprotein proline-glutamine rich 1 from Homo sapiens (Human).